The sequence spans 745 residues: Eukaryotic translation initiation factor 3 subunit B (745 aa).

Residues 41-129 (DVIVIEGVPV…HRFSVHRFTD (89 aa)) form the RRM domain. WD repeat units lie at residues 189-230 (EHSR…RFMR), 251-293 (WSHE…RSFP), 303-344 (GQLK…LLEK), and 580-625 (GEHY…LQKH). The stretch at 644 to 745 (GKDEQKRVRK…IIEETEEVLA (102 aa)) forms a coiled coil.

This sequence belongs to the eIF-3 subunit B family. In terms of assembly, component of the eukaryotic translation initiation factor 3 (eIF-3) complex.

Its subcellular location is the cytoplasm. Its function is as follows. RNA-binding component of the eukaryotic translation initiation factor 3 (eIF-3) complex, which is involved in protein synthesis of a specialized repertoire of mRNAs and, together with other initiation factors, stimulates binding of mRNA and methionyl-tRNAi to the 40S ribosome. The eIF-3 complex specifically targets and initiates translation of a subset of mRNAs involved in cell proliferation. The polypeptide is Eukaryotic translation initiation factor 3 subunit B (Mycosarcoma maydis (Corn smut fungus)).